The chain runs to 178 residues: uncharacterized protein (178 aa).

The N-terminal stretch at 1 to 19 (MKKNIHILGASGVGTSTLG) is a signal peptide.

This is an uncharacterized protein from Bacillus subtilis (strain 168).